We begin with the raw amino-acid sequence, 134 residues long: Crustacean hyperglycemic hormones isoform A (134 aa).

Positions 1-24 (MMACRTLCLVVVMVASLGTSGVGG) are cleaved as a signal peptide. A Pyrrolidone carboxylic acid modification is found at Gln61. Phe63 carries the post-translational modification D-phenylalanine; in form CHH-A-II. 3 disulfide bridges follow: Cys67-Cys103, Cys83-Cys99, and Cys86-Cys112. At Val132 the chain carries Valine amide.

Belongs to the arthropod CHH/MIH/GIH/VIH hormone family. In terms of processing, stereoinversion of L-Phe (form CHH-A-I) to D-Phe (form CHH-A-II). As to expression, produced by the medulla terminalis X-organ in the eyestalks and transported to the sinus gland where they are stored and released. Present also in the ventral nervous system.

It localises to the secreted. In terms of biological role, CHH is the most abundant hormone in the sinus gland of isopods and decapods which controls the blood sugar level. Has a secretagogue action over the amylase released from the midgut gland. May act as a stress hormone. Functionally, MIH may inhibit Y-organs where molting hormone (ecdysteroid) is secreted and a molting cycle is initiated when MIH secretion diminishes or stops. The chain is Crustacean hyperglycemic hormones isoform A from Homarus americanus (American lobster).